The chain runs to 620 residues: Glutathione-regulated potassium-efflux system protein KefC (620 aa).

A run of 12 helical transmembrane segments spans residues 4 to 24 (HTLLQALIYLGSAALIVPIAV), 26 to 46 (LGLGSVLGYLIAGCIIGPWGL), 54 to 74 (SILHFAEIGVVLMLFVIGLEL), 90 to 110 (GALQMVVCGGLIGLFCMFLGL), 114 to 134 (VAELIGMTLALSSTAIAMQAM), 149 to 169 (FAVLLFQDIAAIPLVAMIPLL), 178 to 198 (LGAFALSALKVAGALALVVLL), 218 to 238 (VFSAVALFLVFGFGLLLEEVG), 270 to 290 (GLLLGLFFIGVGMSIDFGTLV), 294 to 314 (LRILLLLAGFLAIKIVMLWLV), 327 to 347 (WFAVLLGQGSEFAFVVFGAAQ), and 359 to 379 (ALTLAVALSMAATPIFLVLLT). The RCK N-terminal domain maps to 399–518 (QPRVIVAGFG…AGVAMPERET (120 aa)). The tract at residues 599–620 (QGTAEGKHSGEAADEPEVKPSI) is disordered.

The protein belongs to the monovalent cation:proton antiporter 2 (CPA2) transporter (TC 2.A.37) family. KefC subfamily. Homodimer. Interacts with the regulatory subunit KefF.

Its subcellular location is the cell inner membrane. Its function is as follows. Pore-forming subunit of a potassium efflux system that confers protection against electrophiles. Catalyzes K(+)/H(+) antiport. This Salmonella dublin (strain CT_02021853) protein is Glutathione-regulated potassium-efflux system protein KefC.